The primary structure comprises 445 residues: Tubulin beta-7 chain (445 aa).

Positions 11, 69, 138, 142, 143, 144, 204, and 226 each coordinate GTP. Glu69 contacts Mg(2+). The interval 421–445 (EYQQYQDATAEDEEYEEEEEEEEET) is disordered. Acidic residues predominate over residues 429 to 445 (TAEDEEYEEEEEEEEET).

The protein belongs to the tubulin family. As to quaternary structure, dimer of alpha and beta chains. A typical microtubule is a hollow water-filled tube with an outer diameter of 25 nm and an inner diameter of 15 nM. Alpha-beta heterodimers associate head-to-tail to form protofilaments running lengthwise along the microtubule wall with the beta-tubulin subunit facing the microtubule plus end conferring a structural polarity. Microtubules usually have 13 protofilaments but different protofilament numbers can be found in some organisms and specialized cells. Requires Mg(2+) as cofactor.

It localises to the cytoplasm. The protein resides in the cytoskeleton. Its function is as follows. Tubulin is the major constituent of microtubules, a cylinder consisting of laterally associated linear protofilaments composed of alpha- and beta-tubulin heterodimers. Microtubules grow by the addition of GTP-tubulin dimers to the microtubule end, where a stabilizing cap forms. Below the cap, tubulin dimers are in GDP-bound state, owing to GTPase activity of alpha-tubulin. This chain is Tubulin beta-7 chain (TUBB7), found in Zea mays (Maize).